The primary structure comprises 676 residues: Envelope glycoprotein (676 aa).

The signal sequence occupies residues 1–32 (MGASGILQLPRERFRKTSFFVWVIILFHKVFS). Topologically, residues 33 to 650 (IPLGVVHNNT…GSNWWTGWKQ (618 aa)) are extracellular. N-linked (GlcNAc...) asparagine; by host glycosylation occurs at Asn-40. 5 disulfide bridges follow: Cys-53-Cys-609, Cys-108-Cys-135, Cys-121-Cys-147, Cys-511-Cys-556, and Cys-601-Cys-608. Residues 54 to 201 (RDKLSSTSQL…DFFQSPPLHE (148 aa)) are receptor-binding. N-linked (GlcNAc...) asparagine; by host glycosylation is found at Asn-204, Asn-228, Asn-257, Asn-268, and Asn-296. The segment at 305 to 485 (ELSFVPVPET…LSGPGFLTNT (181 aa)) is mucin-like region. The segment at 356–463 (IKGKDTMPTT…PTTLPEQHTA (108 aa)) is disordered. Residues 361 to 374 (TMPTTVTGVPTTTP) show a composition bias toward low complexity. A compositionally biased stretch (polar residues) spans 402-422 (TTQPAKTTSQPTNSTESTTLN). Asn-414 carries an N-linked (GlcNAc...) asparagine; by host glycan. A compositionally biased stretch (low complexity) spans 423 to 440 (PTSEPSSRGTGPSSPTVP). A glycan (N-linked (GlcNAc...) asparagine; by host) is linked at Asn-441. Over residues 452-463 (TTPTTLPEQHTA) the composition is skewed to polar residues. A fusion peptide region spans residues 524-539 (GAAIGLAWIPYFGPAA). Residues 554–595 (LICGLRQLANETTQALQLFLRATTELRTFSILNRKAIDFLLQ) adopt a coiled-coil conformation. Asn-563 carries an N-linked (GlcNAc...) asparagine; by host glycan. Residues 615-634 (WTKNITDKIDQIIHDFVDNN) adopt a coiled-coil conformation. N-linked (GlcNAc...) asparagine; by host glycosylation is present at Asn-618. Residues 651-671 (WVPAGIGITGVIIAIIALLCI) traverse the membrane as a helical segment. S-palmitoyl cysteine; by host attachment occurs at residues Cys-670 and Cys-672. Residues 672 to 676 (CKFML) lie on the Cytoplasmic side of the membrane.

The protein belongs to the filoviruses glycoprotein family. Homotrimer; each monomer consists of a GP1 and a GP2 subunit linked by disulfide bonds. The resulting peplomers (GP1,2) protrude from the virus surface as spikes. GP1 and GP2delta are part of GP1,2delta soluble complexes released by ectodomain shedding. GP1,2 interacts with host integrin ITGAV/alpha-V and CLEC10A. Also binds human CD209 and CLEC4M (collectively referred to as DC-SIGN(R)), as well as human FOLR1. Interacts with host entry receptor NPC1. Post-translationally, the signal peptide region modulates GP's high mannose glycosylation, thereby determining the efficiency of the interactions with DC-SIGN(R). In terms of processing, N-glycosylated. O-glycosylated in the mucin-like region. Post-translationally, palmitoylation of GP2 is not required for its function. In terms of processing, specific enzymatic cleavages in vivo yield mature proteins. The precursor is processed into GP1 and GP2 by host cell furin in the trans Golgi, and maybe by other host proteases, to yield the mature GP1 and GP2 proteins. The cleavage site corresponds to the furin optimal cleavage sequence [KR]-X-[KR]-R. This cleavage does not seem to be required for function. After the internalization of the virus into cell endosomes, GP1 C-terminus is removed by the endosomal proteases cathepsin B, cathepsin L, or both, leaving a 19-kDa N-terminal fragment which is further digested by cathepsin B. Proteolytic processing of GP1,2 by host ADAM17 can remove the transmembrane anchor of GP2 and leads to shedding of complexes consisting in GP1 and truncated GP2 (GP1,2delta).

It localises to the virion membrane. The protein resides in the host cell membrane. The protein localises to the secreted. In terms of biological role, GP1 is responsible for binding to the receptor(s) on target cells. Interacts with CD209/DC-SIGN and CLEC4M/DC-SIGNR which act as cofactors for virus entry into the host cell. Binding to CD209 and CLEC4M, which are respectively found on dendritic cells (DCs), and on endothelial cells of liver sinusoids and lymph node sinuses, facilitate infection of macrophages and endothelial cells. These interactions not only facilitate virus cell entry, but also allow capture of viral particles by DCs and subsequent transmission to susceptible cells without DCs infection (trans infection). Binding to the macrophage specific lectin CLEC10A also seems to enhance virus infectivity. Interaction with FOLR1/folate receptor alpha may be a cofactor for virus entry in some cell types, although results are contradictory. Members of the Tyro3 receptor tyrosine kinase family also seem to be cell entry factors in filovirus infection. Once attached, the virions are internalized through clathrin-dependent endocytosis and/or macropinocytosis. After internalization of the virus into the endosomes of the host cell, proteolysis of GP1 by two cysteine proteases, CTSB/cathepsin B and CTSL/cathepsin L presumably induces a conformational change of GP2, unmasking its fusion peptide and initiating membranes fusion. Its function is as follows. GP2 acts as a class I viral fusion protein. Under the current model, the protein has at least 3 conformational states: pre-fusion native state, pre-hairpin intermediate state, and post-fusion hairpin state. During viral and target cell membrane fusion, the coiled coil regions (heptad repeats) assume a trimer-of-hairpins structure, positioning the fusion peptide in close proximity to the C-terminal region of the ectodomain. The formation of this structure appears to drive apposition and subsequent fusion of viral and target cell membranes. Responsible for penetration of the virus into the cell cytoplasm by mediating the fusion of the membrane of the endocytosed virus particle with the endosomal membrane. Low pH in endosomes induces an irreversible conformational change in GP2, releasing the fusion hydrophobic peptide. GP1,2 which is the disulfid-linked complex of GP1 and GP2, mediates endothelial cell activation and decreases endothelial barrier function. Mediates activation of primary macrophages. At terminal stages of the viral infection, when its expression is high, GP1,2 down-modulates the expression of various host cell surface molecules that are essential for immune surveillance and cell adhesion. Down-modulates integrins ITGA1, ITGA2, ITGA3, ITGA4, ITGA5, ITGA6, ITGAV and ITGB1. GP1,2 alters the cellular recycling of the dimer alpha-V/beta-3 via a dynamin-dependent pathway. Decrease in the host cell surface expression of various adhesion molecules may lead to cell detachment, contributing to the disruption of blood vessel integrity and hemorrhages developed during Ebola virus infection (cytotoxicity). This cytotoxicity appears late in the infection, only after the massive release of viral particles by infected cells. Down-modulation of host MHC-I, leading to altered recognition by immune cells, may explain the immune suppression and inflammatory dysfunction linked to Ebola infection. Also down-modulates EGFR surface expression. Counteracts the antiviral effect of host tetherin. Functionally, GP2delta is part of the complex GP1,2delta released by host ADAM17 metalloprotease. This secreted complex may play a role in the pathogenesis of the virus by efficiently blocking the neutralizing antibodies that would otherwise neutralize the virus surface glycoproteins GP1,2. Might therefore contribute to the lack of inflammatory reaction seen during infection in spite the of extensive necrosis and massive virus production. GP1,2delta does not seem to be involved in activation of primary macrophages. The sequence is that of Envelope glycoprotein (GP) from Tai Forest ebolavirus (strain Cote d'Ivoire-94) (TAFV).